Reading from the N-terminus, the 157-residue chain is Protein Smg (157 aa).

This sequence belongs to the Smg family.

In Sodalis glossinidius (strain morsitans), this protein is Protein Smg.